A 129-amino-acid chain; its full sequence is Phosphoribosyl-AMP cyclohydrolase (129 aa).

A Mg(2+)-binding site is contributed by aspartate 76. Zn(2+) is bound at residue cysteine 77. Positions 78 and 80 each coordinate Mg(2+). Zn(2+) contacts are provided by cysteine 97 and cysteine 104.

Belongs to the PRA-CH family. As to quaternary structure, homodimer. Requires Mg(2+) as cofactor. Zn(2+) serves as cofactor.

It localises to the cytoplasm. The enzyme catalyses 1-(5-phospho-beta-D-ribosyl)-5'-AMP + H2O = 1-(5-phospho-beta-D-ribosyl)-5-[(5-phospho-beta-D-ribosylamino)methylideneamino]imidazole-4-carboxamide. The protein operates within amino-acid biosynthesis; L-histidine biosynthesis; L-histidine from 5-phospho-alpha-D-ribose 1-diphosphate: step 3/9. Functionally, catalyzes the hydrolysis of the adenine ring of phosphoribosyl-AMP. This Albidiferax ferrireducens (strain ATCC BAA-621 / DSM 15236 / T118) (Rhodoferax ferrireducens) protein is Phosphoribosyl-AMP cyclohydrolase.